The chain runs to 20 residues: Superoxide dismutase [Mn], mitochondrial (20 aa).

This sequence belongs to the iron/manganese superoxide dismutase family. Homotetramer. Mn(2+) serves as cofactor.

It is found in the mitochondrion matrix. It carries out the reaction 2 superoxide + 2 H(+) = H2O2 + O2. In terms of biological role, destroys superoxide anion radicals which are normally produced within the cells and which are toxic to biological systems. The chain is Superoxide dismutase [Mn], mitochondrial (SODA) from Hordeum vulgare (Barley).